A 150-amino-acid polypeptide reads, in one-letter code: UPF0178 protein ECA0873 (150 aa).

This sequence belongs to the UPF0178 family.

The sequence is that of UPF0178 protein ECA0873 from Pectobacterium atrosepticum (strain SCRI 1043 / ATCC BAA-672) (Erwinia carotovora subsp. atroseptica).